We begin with the raw amino-acid sequence, 405 residues long: MENYNDILEKMLNGEIKPYQLDKMFGSKIATEIRRKFIEKKVGIEFKHICNYSIDEEMAMKKNIENMIGAIQIPLGFAGPLKINGEYAKGEFYIPLATTEGALVASVNRGCSIITKCGGATVRVIDDKMTRAPCLKTKSVVDAIKVRDWIRENFERIKEVAESTTRHGKLIKIEPILIVGRNLYPRFVFKTGDAMGMNMVTIATEKACNFIEGELKKEGIFVKTVAVSGNACVDKKPSGMNLINGRGKSIVAEVFLTEKEVNKYLKTTSQAIAEVNRLKNYIGSAISNSMGFNAHYANIIGAIFLATGQDEAHIVEGSLGITMAEVEDDGLYFSVTLPDVPIGTVGGGTRVETQKECLEMLGCYGDNKALKFAEIVGAAVLAGELSLLGALAAGHLGKAHQELGR.

Residues E100 and D310 each act as charge relay system in the active site. H400 serves as the catalytic Proton donor.

Belongs to the HMG-CoA reductase family.

The catalysed reaction is (R)-mevalonate + 2 NADP(+) + CoA = (3S)-3-hydroxy-3-methylglutaryl-CoA + 2 NADPH + 2 H(+). It participates in metabolic intermediate biosynthesis; (R)-mevalonate biosynthesis; (R)-mevalonate from acetyl-CoA: step 3/3. Functionally, converts HMG-CoA to mevalonate. This chain is 3-hydroxy-3-methylglutaryl-coenzyme A reductase (hmgA), found in Methanocaldococcus jannaschii (strain ATCC 43067 / DSM 2661 / JAL-1 / JCM 10045 / NBRC 100440) (Methanococcus jannaschii).